Here is a 419-residue protein sequence, read N- to C-terminus: Glutamate dehydrogenase (419 aa).

K105 is a catalytic residue. NAD(+) is bound at residue 219–225; that stretch reads GYGNAGY.

Belongs to the Glu/Leu/Phe/Val dehydrogenases family. In terms of assembly, homohexamer.

It carries out the reaction L-glutamate + NAD(+) + H2O = 2-oxoglutarate + NH4(+) + NADH + H(+). It catalyses the reaction L-glutamate + NADP(+) + H2O = 2-oxoglutarate + NH4(+) + NADPH + H(+). The polypeptide is Glutamate dehydrogenase (gdhA) (Thermococcus profundus).